The chain runs to 129 residues: Prefoldin subunit 6 (129 aa).

Position 2 is an N-acetylalanine (alanine 2). Lysine 21 carries the post-translational modification N6-acetyllysine. Lysine 66 carries the post-translational modification N6-acetyllysine; alternate. Lysine 66 is covalently cross-linked (Glycyl lysine isopeptide (Lys-Gly) (interchain with G-Cter in SUMO1); alternate). A Glycyl lysine isopeptide (Lys-Gly) (interchain with G-Cter in SUMO2); alternate cross-link involves residue lysine 66.

It belongs to the prefoldin subunit beta family. In terms of assembly, heterohexamer of two PFD-alpha type and four PFD-beta type subunits. Component of the PAQosome complex which is responsible for the biogenesis of several protein complexes and which consists of R2TP complex members RUVBL1, RUVBL2, RPAP3 and PIH1D1, URI complex members PFDN2, PFDN6, PDRG1, UXT and URI1 as well as ASDURF, POLR2E and DNAAF10/WDR92.

Its function is as follows. Binds specifically to cytosolic chaperonin (c-CPN) and transfers target proteins to it. Binds to nascent polypeptide chain and promotes folding in an environment in which there are many competing pathways for nonnative proteins. The protein is Prefoldin subunit 6 (PFDN6) of Canis lupus familiaris (Dog).